Reading from the N-terminus, the 340-residue chain is Protein RecA (340 aa).

65-72 (GPESGGKT) contributes to the ATP binding site.

It belongs to the RecA family.

It localises to the cytoplasm. In terms of biological role, can catalyze the hydrolysis of ATP in the presence of single-stranded DNA, the ATP-dependent uptake of single-stranded DNA by duplex DNA, and the ATP-dependent hybridization of homologous single-stranded DNAs. It interacts with LexA causing its activation and leading to its autocatalytic cleavage. The sequence is that of Protein RecA from Thermus thermophilus.